A 278-amino-acid chain; its full sequence is MAEQRWTGQLDLTVFNNGQSSKARNIFFEKALKVLRPIYLEQSPVPTFYIVNVGGGYLDGDRYRVNVNLEDNAQVTLTSQGATKIYKTPNDHVEQYQTFNLSNQSYMEFVADPIIAYENAKFFQHNTFNLKEDSAMFYTDILTPGYSSNGQDFTYNYMHLINEIYIDNQLVVFDNMMLSPDKSRLDGIGYMENYTHLGSAYFIHPDVNQSFIDDIYAAVADFQKQYDCRIGISQLPTHGLAVRILTKRTQIIEEILTRVQSYINQTIYHRQINFLRKY.

The protein belongs to the UreD family. In terms of assembly, ureD, UreF and UreG form a complex that acts as a GTP-hydrolysis-dependent molecular chaperone, activating the urease apoprotein by helping to assemble the nickel containing metallocenter of UreC. The UreE protein probably delivers the nickel.

The protein resides in the cytoplasm. Its function is as follows. Required for maturation of urease via the functional incorporation of the urease nickel metallocenter. This chain is Urease accessory protein UreD, found in Staphylococcus epidermidis (strain ATCC 12228 / FDA PCI 1200).